Consider the following 356-residue polypeptide: Decorin (356 aa).

The N-terminal stretch at 1-15 (MRLVLFILLLPVCLA) is a signal peptide. Positions 16 to 29 (TPFHQKGLFDFMLE) are excised as a propeptide. Serine 45 carries O-linked (Xyl...) (glycosaminoglycan) serine glycosylation. Disulfide bonds link cysteine 51-cysteine 57 and cysteine 55-cysteine 64. LRR repeat units lie at residues 70 to 90 (ERVP…NNKI), 91 to 114 (TEIR…NNKI), 115 to 138 (SKIS…KNNL), 139 to 159 (KELP…ENEI), 160 to 183 (SKLR…TNPL), 184 to 209 (KSSG…DTNI), 210 to 230 (TSIP…GNKI), 231 to 254 (SKID…FNSI), 255 to 278 (SSVE…NNEL), 279 to 301 (VRVP…NNKI), 302 to 331 (ASIG…SNPV), and 332 to 356 (QYWE…GNYK). Asparagine 208 carries N-linked (GlcNAc...) asparagine glycosylation. Asparagine 259 carries N-linked (GlcNAc...) asparagine glycosylation. Cysteine 310 and cysteine 343 are joined by a disulfide.

It belongs to the small leucine-rich proteoglycan (SLRP) family. SLRP class I subfamily. Binds to type I and type II collagen, to fibronectin and TGF-beta. Forms a ternary complex with MFAP2 and ELN. Post-translationally, the attached glycosaminoglycan chain can be either chondroitin sulfate or dermatan sulfate depending upon the tissue of origin.

It is found in the secreted. The protein localises to the extracellular space. The protein resides in the extracellular matrix. In terms of biological role, may affect the rate of fibrils formation. The chain is Decorin (DCN) from Coturnix japonica (Japanese quail).